The following is a 406-amino-acid chain: Tryptophan synthase beta chain (406 aa).

Lysine 99 is modified (N6-(pyridoxal phosphate)lysine).

The protein belongs to the TrpB family. In terms of assembly, tetramer of two alpha and two beta chains. Requires pyridoxal 5'-phosphate as cofactor.

The catalysed reaction is (1S,2R)-1-C-(indol-3-yl)glycerol 3-phosphate + L-serine = D-glyceraldehyde 3-phosphate + L-tryptophan + H2O. It functions in the pathway amino-acid biosynthesis; L-tryptophan biosynthesis; L-tryptophan from chorismate: step 5/5. Functionally, the beta subunit is responsible for the synthesis of L-tryptophan from indole and L-serine. In Methylobacterium nodulans (strain LMG 21967 / CNCM I-2342 / ORS 2060), this protein is Tryptophan synthase beta chain.